Here is a 338-residue protein sequence, read N- to C-terminus: GTPase Obg (338 aa).

Residues 1–159 (MQFIDEVKIH…RWLRLELKLL (159 aa)) form the Obg domain. Positions 160 to 331 (ADVGLLGFPN…LLDEIARSLW (172 aa)) constitute an OBG-type G domain. Residues 166-173 (GFPNVGKS), 191-195 (FTTLK), 213-216 (DIPG), 283-286 (NKMD), and 312-314 (SAA) contribute to the GTP site. Mg(2+)-binding residues include S173 and T193.

It belongs to the TRAFAC class OBG-HflX-like GTPase superfamily. OBG GTPase family. Monomer. Requires Mg(2+) as cofactor.

The protein resides in the cytoplasm. Functionally, an essential GTPase which binds GTP, GDP and possibly (p)ppGpp with moderate affinity, with high nucleotide exchange rates and a fairly low GTP hydrolysis rate. Plays a role in control of the cell cycle, stress response, ribosome biogenesis and in those bacteria that undergo differentiation, in morphogenesis control. This chain is GTPase Obg, found in Geobacter sulfurreducens (strain ATCC 51573 / DSM 12127 / PCA).